A 410-amino-acid polypeptide reads, in one-letter code: Arginine deiminase (410 aa).

Residue C400 is the Amidino-cysteine intermediate of the active site.

The protein belongs to the arginine deiminase family.

The protein resides in the cytoplasm. The catalysed reaction is L-arginine + H2O = L-citrulline + NH4(+). The protein operates within amino-acid degradation; L-arginine degradation via ADI pathway; carbamoyl phosphate from L-arginine: step 1/2. This Lactococcus lactis subsp. lactis (strain IL1403) (Streptococcus lactis) protein is Arginine deiminase (arcA).